The sequence spans 233 residues: Cysteine-rich venom protein (233 aa).

The signal sequence occupies residues 1–12 (PILAAVLQQSSG). One can recognise an SCP domain in the interval 31–159 (VDLHNSLRRS…PYSYFFVCQY (129 aa)). 8 disulfides stabilise this stretch: C68/C146, C85/C160, C141/C157, C179/C186, C182/C191, C195/C228, C204/C222, and C213/C226. In terms of domain architecture, ShKT spans 195 to 228 (CTRENKFTNCNTMVQQSSCQDNYMKTNCPASCFC).

This sequence belongs to the CRISP family. Expressed by the venom gland.

It localises to the secreted. In terms of biological role, blocks contraction of smooth muscle elicited by high potassium-induced depolarization, but does not block caffeine-stimulated contraction. May target voltage-gated calcium channels on smooth muscle. This chain is Cysteine-rich venom protein, found in Trimeresurus stejnegeri (Chinese green tree viper).